We begin with the raw amino-acid sequence, 899 residues long: Androgen receptor (899 aa).

Positions 1–537 (MEVQLGLGRV…PIDYYFPPQK (537 aa)) are modulating. Residues 1–566 (MEVQLGLGRV…GSCKVFFKRA (566 aa)) form an interaction with ZNF318 region. Disordered regions lie at residues 35–146 (QNPG…LSLL) and 175–222 (QQQQ…LGGN). Phosphoserine; by CDK9 is present on Ser61. At Ser75 the chain carries Phosphoserine. Low complexity-rich tracts occupy residues 94–103 (QPSQQQAASE) and 175–193 (QQQQ…QQQQ). The segment covering 210 to 222 (APSSSKDSYLGGN) has biased composition (polar residues). Tyr218 bears the Phosphotyrosine; by CSK mark. At Ser251 the chain carries Phosphoserine. Position 262 is a phosphotyrosine; by CSK and TNK2 (Tyr262). A phosphotyrosine; by CSK mark is found at Tyr302, Tyr341, Tyr352, and Tyr357. Tyr358 bears the Phosphotyrosine; by CSK and TNK2 mark. Residue Lys381 forms a Glycyl lysine isopeptide (Lys-Gly) (interchain with G-Cter in SUMO) linkage. Tyr388 carries the post-translational modification Phosphotyrosine; by CSK. Positions 436-471 (EGQLYGPGGGGGSSSPSDAGPVAPYGYTRPPQGLTS) are disordered. Lys500 is covalently cross-linked (Glycyl lysine isopeptide (Lys-Gly) (interchain with G-Cter in SUMO)). Tyr514 and Tyr531 each carry phosphotyrosine; by CSK. Residues 531-898 (YYFPPQKTCL…GKVKPIYFHT (368 aa)) are interaction with LPXN. Positions 538–611 (TCLICGDEAS…AGMTLGARKL (74 aa)) form a DNA-binding region, nuclear receptor. 2 consecutive NR C4-type zinc fingers follow at residues 539–559 (CLIC…CGSC) and 575–599 (CASR…LRKC). Residues 551–641 (YGALTCGSCK…TEDPSQKMTV (91 aa)) form an interaction with HIPK3 region. The tract at residues 571–898 (QKYLCASRND…GKVKPIYFHT (328 aa)) is interaction with CCAR1. Positions 604–898 (MTLGARKLKK…GKVKPIYFHT (295 aa)) are interaction with KAT7. At Ser630 the chain carries Phosphoserine. The 232-residue stretch at 648-879 (ECQPIFLNVL…DFPEMMAEII (232 aa)) folds into the NR LBD domain. The 17beta-hydroxy-5alpha-androstan-3-one site is built by Asn685 and Arg732. Glycyl lysine isopeptide (Lys-Gly) (interchain with G-Cter in ubiquitin) cross-links involve residues Lys825 and Lys827. Thr857 is a binding site for 17beta-hydroxy-5alpha-androstan-3-one. Tyr895 is modified (phosphotyrosine; by CSK).

The protein belongs to the nuclear hormone receptor family. NR3 subfamily. Binds DNA as a homodimer. Part of a ternary complex containing AR, EFCAB6/DJBP and PARK7. Interacts with HIPK3 and NR0B2 in the presence of androgen. The ligand binding domain interacts with KAT7/HBO1 in the presence of dihydrotestosterone. Interacts with EFCAB6/DJBP, PQBP1, RANBP9, SPDEF, SRA1, TGFB1I1, ZNF318 and RREB1. The AR N-terminal poly-Gln region binds Ran resulting in enhancement of AR-mediated transactivation. Ran-binding decreases as the poly-Gln length increases. Interacts with ZMIZ1/ZIMP10 and ZMIZ2/ZMIP7 which both enhance its transactivation activity. Interacts with RBAK. Interacts via the ligand-binding domain with LXXLL and FXXLF motifs from NCOA1, NCOA2, NCOA3 and MAGEA11. Interacts (via nuclear receptor DNA binding domain and nuclear receptor ligand binding domain) with NCOA4. Interacts with HIP1 (via coiled coil domain). Interacts with SLC30A9 and RAD54L2/ARIP4. Interacts with MACROD1 (via macro domain). Interacts (via ligand-binding domain) with TRIM68. Interacts with TNK2. Interacts with USP26. Interacts with RNF6. Interacts (regulated by RNF6 probably through polyubiquitination) with RNF14; regulates AR transcriptional activity. Interacts with PRMT2 and TRIM24. Interacts with RACK1. Interacts with RANBP10; this interaction enhances hormone-induced AR transcriptional activity. Interacts with PRPF6 in a hormone-independent way; this interaction enhances hormone-induced AR transcriptional activity. Interacts with STK4/MST1. Interacts with ZIPK/DAPK3. Interacts with LPXN. Interacts with MAK. Part of a complex containing AR, MAK and NCOA3. Interacts with CRY1. Interacts with CCAR1 and GATA2. Interacts with BUD31. Interacts with ARID4A. Interacts with ARID4B. Interacts (via NR LBD domain) with ZBTB7A; the interaction is direct and androgen-dependent. Interacts with NCOR1. Interacts with NCOR2. Interacts with CRY2 in a ligand-dependent manner. Post-translationally, phosphorylated in prostate cancer cells in response to several growth factors including EGF. Phosphorylation is induced by c-Src kinase (CSK). Tyr-514 is one of the major phosphorylation sites and an increase in phosphorylation and Src kinase activity is associated with prostate cancer progression. Phosphorylation by TNK2 enhances the DNA-binding and transcriptional activity. Phosphorylation at Ser-61 by CDK9 regulates AR promoter selectivity and cell growth. Phosphorylation by PAK6 leads to AR-mediated transcription inhibition. Sumoylated on Lys-381 (major) and Lys-500. Ubiquitinated. Deubiquitinated by USP26. 'Lys-6' and 'Lys-27'-linked polyubiquitination by RNF6 modulates AR transcriptional activity and specificity. In terms of processing, palmitoylated by ZDHHC7 and ZDHHC21. Palmitoylation is required for plasma membrane targeting and for rapid intracellular signaling via ERK and AKT kinases and cAMP generation.

It is found in the nucleus. Its subcellular location is the cytoplasm. Steroid hormone receptors are ligand-activated transcription factors that regulate eukaryotic gene expression and affect cellular proliferation and differentiation in target tissues. Transcription factor activity is modulated by bound coactivator and corepressor proteins like ZBTB7A that recruits NCOR1 and NCOR2 to the androgen response elements/ARE on target genes, negatively regulating androgen receptor signaling and androgen-induced cell proliferation. Transcription activation is also down-regulated by NR0B2. Activated, but not phosphorylated, by HIPK3 and ZIPK/DAPK3. The polypeptide is Androgen receptor (Ar) (Mus musculus (Mouse)).